Consider the following 1234-residue polypeptide: ATP-dependent helicase/nuclease subunit A (1234 aa).

The 474-residue stretch at 2–475 (TQFTTSQQAA…IILAENFRST (474 aa)) folds into the UvrD-like helicase ATP-binding domain. 23-30 (ASAGSGKT) contributes to the ATP binding site. A UvrD-like helicase C-terminal domain is found at 507 to 806 (YGALDYGDAH…KLMTIHKSKG (300 aa)).

This sequence belongs to the helicase family. AddA subfamily. In terms of assembly, heterodimer of AddA and AddB/RexB. The cofactor is Mg(2+).

The catalysed reaction is Couples ATP hydrolysis with the unwinding of duplex DNA by translocating in the 3'-5' direction.. It catalyses the reaction ATP + H2O = ADP + phosphate + H(+). Its function is as follows. The heterodimer acts as both an ATP-dependent DNA helicase and an ATP-dependent, dual-direction single-stranded exonuclease. Recognizes the chi site generating a DNA molecule suitable for the initiation of homologous recombination. The AddA nuclease domain is required for chi fragment generation; this subunit has the helicase and 3' -&gt; 5' nuclease activities. This is ATP-dependent helicase/nuclease subunit A from Lacticaseibacillus casei (strain BL23) (Lactobacillus casei).